Consider the following 169-residue polypeptide: Oleosin Cor a 15 (169 aa).

The next 2 membrane-spanning stretches (helical) occupy residues 38–58 (IAVV…GLTF) and 70–90 (PLFV…GLAV). A Proline-knot motif is present at residues 70-81 (PLFVLCSPVLVP). 2 stretches are compositionally biased toward basic and acidic residues: residues 122–131 (QMEHAKRRAQ) and 160–169 (EGGRGEEKKT). The segment at 122–169 (QMEHAKRRAQDTAGHLGQKARETGQTVTGKGQEAGKTLEGGRGEEKKT) is disordered.

Belongs to the oleosin family. As to expression, expressed in seeds (at protein level).

It localises to the lipid droplet. The protein resides in the membrane. Functionally, may have a structural role to stabilize the lipid body during desiccation of the seed by preventing coalescence of the oil. Probably interacts with both lipid and phospholipid moieties of lipid bodies. May also provide recognition signals for specific lipase anchorage in lipolysis during seedling growth. This is Oleosin Cor a 15 from Corylus avellana (European hazel).